The following is a 539-amino-acid chain: MAAKDVKFGNDARVKMLNGVNILADAVKVTLGPKGRNVVLDKSFGAPTITKDGVSVAREIELEDKFENMGAQMVKEVASKANDAAGDGTTTATVLAQAIVNEGLKAVAAGMNPMDLKRGIDKAVIAAVEELKKLSVPCSDSKAIAQVGTISANSDETVGKLIAEAMEKVGKEGVITVEEGTGLQDELDVVEGMQFDRGYLSPYFINKPETGSVELESPFILLADKKVSNIRELLPVLEAVAKAGKPLLIVAEDVEGEALATLVVNTMRGIVKVAAVKAPGFGDRRKAMLQDIATLTAGTVISEEIGMELEKATLEDLGQAKRVVINKDTTIIIDGIGDEATIQGRVAQIRQQIEEATSDYDREKLQERVAKLAGGVAVIKVGAATEVEMKEKKARVEDALHATRAAVEEGVVAGGGVALIRVASKIAELKGDNEDQNVGIKVALRAMEAPLRQIVINAGEEASVIANSVKAGEGSYGYNAYSEEYGDMIGMGILDPTKVTRSALQYAASVAGLMITTECMVTDLPKEDKADMGAAGMGG.

Residues 30–33, Lys-51, 87–91, Gly-415, and Asp-495 each bind ATP; these read TLGP and DGTTT.

Belongs to the chaperonin (HSP60) family. In terms of assembly, forms a cylinder of 14 subunits composed of two heptameric rings stacked back-to-back. Interacts with the co-chaperonin GroES.

The protein resides in the cytoplasm. It catalyses the reaction ATP + H2O + a folded polypeptide = ADP + phosphate + an unfolded polypeptide.. Its function is as follows. Together with its co-chaperonin GroES, plays an essential role in assisting protein folding. The GroEL-GroES system forms a nano-cage that allows encapsulation of the non-native substrate proteins and provides a physical environment optimized to promote and accelerate protein folding. This is Chaperonin GroEL from Serratia rubidaea (Serratia marinorubra).